Here is a 247-residue protein sequence, read N- to C-terminus: Small ribosomal subunit protein uS3 (247 aa).

In terms of domain architecture, KH type-2 spans 39 to 107 (VRDYLRKKLD…PAQVNIEEIT (69 aa)). Residues 213 to 247 (SVYNPPKEDKTRAPKRRGRSNSNRRNSDRANTDRG) are disordered. A compositionally biased stretch (basic and acidic residues) spans 237–247 (RNSDRANTDRG).

This sequence belongs to the universal ribosomal protein uS3 family. Part of the 30S ribosomal subunit. Forms a tight complex with proteins S10 and S14.

In terms of biological role, binds the lower part of the 30S subunit head. Binds mRNA in the 70S ribosome, positioning it for translation. This chain is Small ribosomal subunit protein uS3, found in Psychrobacter sp. (strain PRwf-1).